Here is a 515-residue protein sequence, read N- to C-terminus: Glycosyltransferase family 92 protein F59C6.8 (515 aa).

Residues 18–38 traverse the membrane as a helical segment; the sequence is LFIFIAVCLGFLIAVTILAGL. One can recognise a GT92 domain in the interval 163–456; sequence RKVVACFSPL…IEVCYNRIFY (294 aa).

The protein belongs to the glycosyltransferase 92 family.

It localises to the membrane. In Caenorhabditis elegans, this protein is Glycosyltransferase family 92 protein F59C6.8.